Here is a 239-residue protein sequence, read N- to C-terminus: UDP-2,3-diacylglucosamine hydrolase (239 aa).

Mn(2+) is bound by residues Asp-8, His-10, Asp-41, Asn-79, and His-114. 79 to 80 (NR) contributes to the substrate binding site. 5 residues coordinate substrate: Asp-122, Ser-160, Asn-164, Lys-167, and His-195. Mn(2+) contacts are provided by His-195 and His-197.

It belongs to the LpxH family. Mn(2+) is required as a cofactor.

It is found in the cell inner membrane. It catalyses the reaction UDP-2-N,3-O-bis[(3R)-3-hydroxytetradecanoyl]-alpha-D-glucosamine + H2O = 2-N,3-O-bis[(3R)-3-hydroxytetradecanoyl]-alpha-D-glucosaminyl 1-phosphate + UMP + 2 H(+). It participates in glycolipid biosynthesis; lipid IV(A) biosynthesis; lipid IV(A) from (3R)-3-hydroxytetradecanoyl-[acyl-carrier-protein] and UDP-N-acetyl-alpha-D-glucosamine: step 4/6. Functionally, hydrolyzes the pyrophosphate bond of UDP-2,3-diacylglucosamine to yield 2,3-diacylglucosamine 1-phosphate (lipid X) and UMP by catalyzing the attack of water at the alpha-P atom. Involved in the biosynthesis of lipid A, a phosphorylated glycolipid that anchors the lipopolysaccharide to the outer membrane of the cell. The sequence is that of UDP-2,3-diacylglucosamine hydrolase from Sodalis glossinidius (strain morsitans).